The chain runs to 329 residues: Gut-specific cysteine proteinase (329 aa).

Positions Met-1–Ala-15 are cleaved as a signal peptide. The propeptide at Phe-16–Ser-84 is activation peptide. Disulfide bonds link Cys-98/Cys-127, Cys-110/Cys-155, Cys-146/Cys-204, Cys-147/Cys-151, Cys-183/Cys-208, and Cys-191/Cys-196. Cys-113 is an active-site residue. Active-site residues include His-275 and Asn-295.

Belongs to the peptidase C1 family. Larvae exhibit strong expression in gut cells and weak expression in hypodermal cells. Adults exhibit the reverse: strong expression in hypodermal cells and weaker expression in gut cells.

Its function is as follows. Thiol protease. Has a role as a digestive enzyme. The protein is Gut-specific cysteine proteinase (cpr-1) of Caenorhabditis elegans.